The following is a 534-amino-acid chain: Apolipoprotein N-acyltransferase (534 aa).

The next 7 membrane-spanning stretches (helical) occupy residues 8–28 (VILV…AFAV), 31–51 (LPPF…VWLI), 69–89 (AFAV…WWLG), 105–125 (LAIL…VALA), 127–147 (IFWS…GLME), 178–198 (VIGA…PALF), and 208–228 (VALA…ALYL). Positions 246-496 (VQPDIDQAAK…TGFIDATVDS (251 aa)) constitute a CN hydrolase domain. The Proton acceptor role is filled by Glu291. Lys355 is an active-site residue. The active-site Nucleophile is Cys408. A helical membrane pass occupies residues 511 to 531 (FWLTEALLILIALISREGFIF).

Belongs to the CN hydrolase family. Apolipoprotein N-acyltransferase subfamily.

The protein localises to the cell inner membrane. It catalyses the reaction N-terminal S-1,2-diacyl-sn-glyceryl-L-cysteinyl-[lipoprotein] + a glycerophospholipid = N-acyl-S-1,2-diacyl-sn-glyceryl-L-cysteinyl-[lipoprotein] + a 2-acyl-sn-glycero-3-phospholipid + H(+). It functions in the pathway protein modification; lipoprotein biosynthesis (N-acyl transfer). Functionally, catalyzes the phospholipid dependent N-acylation of the N-terminal cysteine of apolipoprotein, the last step in lipoprotein maturation. This Rhizobium etli (strain CIAT 652) protein is Apolipoprotein N-acyltransferase.